The following is a 462-amino-acid chain: Nitrate/nitrite transporter NarU (462 aa).

Topologically, residues 1-35 (MTRQNENYNRYLLSDWRPENPAFWENKGKGIARRN) are cytoplasmic. A helical membrane pass occupies residues 36-56 (LWISVSCLLLAFCVWMLFSAV). The Periplasmic portion of the chain corresponds to 57 to 71 (AVNLNKIGFNFTTDQ). A helical membrane pass occupies residues 72-92 (LFLLTALPSLSGAILRVPYSF). The Cytoplasmic segment spans residues 93–101 (MVPLFGGRK). The chain crosses the membrane as a helical span at residues 102-122 (WTVLSTVILIIPCAWLGFAVQ). The Periplasmic segment spans residues 123-124 (NP). Residues 125 to 145 (ATPFGVFMLIALLCGFAGANF) form a helical membrane-spanning segment. Over 146 to 180 (ASSMGNISFFFPKARQGSALGINGGLGNLGVSVMQ) the chain is Cytoplasmic. The chain crosses the membrane as a helical span at residues 181-201 (LIAPLVIFLPIFTFLGVQGVP). At 202–206 (QPDGS) the chain is on the periplasmic side. The chain crosses the membrane as a helical span at residues 207-227 (LLALTNAAWIWVPLLAVATLA). Residues 228 to 258 (AWFGMNDIGSSKASVASQLPVLKRLHLWLLS) lie on the Cytoplasmic side of the membrane. A helical membrane pass occupies residues 259-279 (LLYLATFGSFIGFSAGFAMLA). At 280–287 (KTQFPDVN) the chain is on the periplasmic side. Residues 288 to 308 (ILQLAFFGPFIGALARSAGGV) form a helical membrane-spanning segment. The Cytoplasmic portion of the chain corresponds to 309-317 (ISDKFGGVR). The chain crosses the membrane as a helical span at residues 318-338 (VTLINFIFMALFTALLFLTLP). Over 339-341 (GSG) the chain is Periplasmic. The helical transmembrane segment at 342–362 (AGSFSAFYLVFMGLFLTAGLG) threads the bilayer. The Cytoplasmic segment spans residues 363–401 (SGSTFQMIAVIFRQITLYNVKLRGGSDEQAQREAVTDTA). The helical transmembrane segment at 402-422 (AALGFISAIGAVGGFFIPKAF) threads the bilayer. Residues 423-432 (GTSLALTGSP) lie on the Periplasmic side of the membrane. A helical transmembrane segment spans residues 433–453 (VGAMKIFLLFYLACVLLTWLV). The Cytoplasmic portion of the chain corresponds to 454–462 (YGRRKPKQQ).

The protein belongs to the major facilitator superfamily. Nitrate/nitrite porter (TC 2.A.1.8) family.

Its subcellular location is the cell inner membrane. Catalyzes nitrate uptake, nitrite uptake and nitrite export across the cytoplasmic membrane. The chain is Nitrate/nitrite transporter NarU (narU) from Salmonella typhimurium (strain LT2 / SGSC1412 / ATCC 700720).